A 464-amino-acid polypeptide reads, in one-letter code: tRNA modification GTPase MnmE (464 aa).

3 residues coordinate (6S)-5-formyl-5,6,7,8-tetrahydrofolate: arginine 25, glutamate 87, and lysine 130. Residues 226 to 386 (GLSVVLAGQP…LRAELLRIAG (161 aa)) enclose the TrmE-type G domain. Residue asparagine 236 coordinates K(+). GTP contacts are provided by residues 236-241 (NVGKSS), 255-261 (TPIAGTT), and 280-283 (DTAG). Serine 240 contacts Mg(2+). The K(+) site is built by threonine 255, isoleucine 257, and threonine 260. A Mg(2+)-binding site is contributed by threonine 261. Lysine 464 contacts (6S)-5-formyl-5,6,7,8-tetrahydrofolate.

The protein belongs to the TRAFAC class TrmE-Era-EngA-EngB-Septin-like GTPase superfamily. TrmE GTPase family. As to quaternary structure, homodimer. Heterotetramer of two MnmE and two MnmG subunits. K(+) serves as cofactor.

It localises to the cytoplasm. Functionally, exhibits a very high intrinsic GTPase hydrolysis rate. Involved in the addition of a carboxymethylaminomethyl (cmnm) group at the wobble position (U34) of certain tRNAs, forming tRNA-cmnm(5)s(2)U34. This is tRNA modification GTPase MnmE from Burkholderia orbicola (strain AU 1054).